We begin with the raw amino-acid sequence, 485 residues long: MSIRFESIEKLTELIKNKEIKPSDVVKDIYAAIEETDPTIKSFLALDKENAIKKAEELDELQAKDQMDGKLFGIPMGIKDNIITKDVETTCASKMLEGFVPIYESTVMNKLHDENAVLIGKLNMDEFAMGGSTETSYFKKTLNPFDHTAVPGGSSGGSAAAVAAGLVPFSLGSDTGGSIRQPASYCGVVGMKPTYGRVSRFGLVAFASSLDQIGPITRNVKDNALVLEAISGVDANDSTSAPVDDVDFTSDIGKDIKGLKIALPKEYLGEGVSEEVKTSVKEAVETLKSLGAEVDEVSLPNTKYGIPSYYVIASSEASVNLARFDGIRYGYHSKEAQSLEELYKMSRSEGFGEEVKRRIFLGTFALSSGYYDAYYKKSQKVRTLIKNDFDKVFESYDVVVGPTAPTTAFNIGEEIDDPLTMYANDLLTTPVNLAGLPGISVPCGQSNGRPIGLQLIGKPFDEKTLYRVAYQFETQYNLHDAYENL.

Active-site charge relay system residues include K79 and S154. S178 (acyl-ester intermediate) is an active-site residue.

It belongs to the amidase family. GatA subfamily. Heterotrimer of A, B and C subunits.

It carries out the reaction L-glutamyl-tRNA(Gln) + L-glutamine + ATP + H2O = L-glutaminyl-tRNA(Gln) + L-glutamate + ADP + phosphate + H(+). Functionally, allows the formation of correctly charged Gln-tRNA(Gln) through the transamidation of misacylated Glu-tRNA(Gln) in organisms which lack glutaminyl-tRNA synthetase. The reaction takes place in the presence of glutamine and ATP through an activated gamma-phospho-Glu-tRNA(Gln). The protein is Glutamyl-tRNA(Gln) amidotransferase subunit A of Staphylococcus epidermidis (strain ATCC 35984 / DSM 28319 / BCRC 17069 / CCUG 31568 / BM 3577 / RP62A).